Reading from the N-terminus, the 2310-residue chain is Retinal-specific phospholipid-transporting ATPase ABCA4 (2310 aa).

Residues 1-21 lie on the Cytoplasmic side of the membrane; it reads MGFLRQIQLLLWKNWTLRKRQ. Residues 22-42 form a helical membrane-spanning segment; that stretch reads KIRFVVELVWPLSLFLVLIWL. Topologically, residues 43 to 646 are extracellular; it reads RNANPLYSQH…MPYPCFVDDS (604 aa). 2 disulfides stabilise this stretch: Cys-54/Cys-81 and Cys-75/Cys-324. Asn-98 carries an N-linked (GlcNAc...) asparagine glycan. The Mg(2+) site is built by Ser-336 and Asn-338. Cys-370 and Cys-519 are joined by a disulfide. N-linked (GlcNAc...) asparagine glycans are attached at residues Asn-415 and Asn-504. An N-all-trans-retinylidenephosphatidylethanolamine is bound by residues Arg-587 and Arg-653. 3 disulfides stabilise this stretch: Cys-641–Cys-1489, Cys-1443–Cys-1454, and Cys-1487–Cys-1501. A helical membrane pass occupies residues 647–667; that stretch reads FMIILNRCFPIFMVLAWIYSV. At 668-699 the chain is on the cytoplasmic side; sequence SMTVKGIVLEKELRLKETLKNQGVSNAVIWCT. Residues 700 to 720 form a helical membrane-spanning segment; the sequence is WFLDSFSIMALSIFLLTLFIM. Residues 721 to 730 lie on the Extracellular side of the membrane; sequence HGRILHYSDP. A helical membrane pass occupies residues 731-751; it reads FILFLFLLAFATATIMQSFLL. At 752–759 the chain is on the cytoplasmic side; it reads STLFSKAS. The chain crosses the membrane as a helical span at residues 760-780; it reads LAAACSGVIYFTLYLPHVLCF. At 781 to 835 the chain is on the extracellular side; sequence AWQDRMTADLKTTVSLLSSVAFGFGTEYLVRFEEQGLGLQWSNIGKSPLEGDEFS. A helical transmembrane segment spans residues 836–856; sequence FLLSMKMMLLDAALYGLLAWY. Topologically, residues 857–1375 are cytoplasmic; that stretch reads LDQVFPGDYG…IRSRKDFVAQ (519 aa). The interval 891-910 is disordered; that stretch reads ERALEKTEPLTEEMEDPEHP. Thr-901 carries the phosphothreonine modification. The 232-residue stretch at 929 to 1160 folds into the ABC transporter 1 domain; sequence VCVKNLVKVF…FGTGFYLTLV (232 aa). Residues Phe-938, Gly-966, and Lys-969 each coordinate ATP. Thr-970 contacts Mg(2+). 6 residues coordinate ATP: Thr-971, Gln-1010, Lys-1054, Gly-1064, Gly-1065, and His-1118. Ser-1185 bears the Phosphoserine mark. Residues 1311 to 1344 are disordered; sequence RQYAQAPHTCSPGQVDPPKGQPSPEPEDPGVPFN. Residues 1376-1396 traverse the membrane as a helical segment; the sequence is IVLPATFVFLALMLSIIVPPF. Residues 1397-1726 lie on the Extracellular side of the membrane; that stretch reads GEFPALTLHP…VSPTTYWLTN (330 aa). N-linked (GlcNAc...) asparagine glycosylation is present at Asn-1468. Asn-1528, Asn-1587, and Asn-1661 each carry an N-linked (GlcNAc...) asparagine glycan. A helical transmembrane segment spans residues 1727-1747; it reads FLWDIMNYAVSAGLVVGIFIG. The Cytoplasmic segment spans residues 1748-1758; sequence FQKKAYTSPDN. Residues 1759-1779 traverse the membrane as a helical segment; the sequence is LPALVSLLMLYGWAVIPMMYP. Over 1780-1791 the chain is Extracellular; sequence ASFLFEVPSTAY. The chain crosses the membrane as a helical span at residues 1792-1812; the sequence is VALSCANLFIGINSSAITFVL. At 1813–1830 the chain is on the cytoplasmic side; sequence ELFENNRTLLRFNAMLRK. A helical membrane pass occupies residues 1831-1851; it reads LLIVFPHFCLGRGLIDLALSQ. Residues 1852 to 1872 lie on the Extracellular side of the membrane; sequence AVTDVYAQFGEEYSANPFQWD. The helical transmembrane segment at 1873–1893 threads the bilayer; that stretch reads LIGKNLVAMAIEGVVYFLLTL. At 1894–2310 the chain is on the cytoplasmic side; sequence LIQHHFFLTR…AEDKHTRSPQ (417 aa). One can recognise an ABC transporter 2 domain in the interval 1937 to 2169; the sequence is LKLNELTKVY…FGDGYIVTMK (233 aa). ATP contacts are provided by Asn-1973, Gly-1974, Lys-1977, Thr-1978, Thr-1979, and Gly-2072. Thr-1978 provides a ligand contact to Mg(2+). Positions 2243–2248 are essential for ATP binding and ATPase activity; sequence VFVNFA. A disordered region spans residues 2266–2310; that stretch reads ASWQAKLEEKSGRLQTQEPLPAGSEQLANGSNPTAAEDKHTRSPQ. Residues 2301–2310 show a composition bias toward basic and acidic residues; that stretch reads AEDKHTRSPQ.

Belongs to the ABC transporter superfamily. ABCA family. N-glycosylated. In terms of processing, proteolytic cleavage by trypsin leads to a 120-kDa N-terminal fragment and a 115-kDa C-terminal fragment that are linked through disulfide bonds. Post-translationally, phosphorylation is independent of light exposure and modulates ATPase activity. Retinal-specific. Seems to be exclusively found in the rims of rod photoreceptor cells.

It is found in the membrane. It localises to the endoplasmic reticulum. Its subcellular location is the cell projection. The protein localises to the cilium. The protein resides in the photoreceptor outer segment. The catalysed reaction is an N-all-trans-retinylidenephosphatidylethanolamine(out) + ATP + H2O = an N-all-trans-retinylidenephosphatidylethanolamine(in) + ADP + phosphate + H(+). It carries out the reaction ATP + H2O + phospholipidSide 1 = ADP + phosphate + phospholipidSide 2.. It catalyses the reaction a 1,2-diacyl-sn-glycero-3-phosphoethanolamine(out) + ATP + H2O = a 1,2-diacyl-sn-glycero-3-phosphoethanolamine(in) + ADP + phosphate + H(+). The enzyme catalyses N-11-cis-retinylidenephosphatidylethanolamine(out) + ATP + H2O = N-11-cis-retinylidenephosphatidylethanolamine(in) + ADP + phosphate + H(+). The catalysed reaction is ATP + H2O = ADP + phosphate + H(+). With respect to regulation, ATPase activity is decreased by cholesterol and ceramide. Phospholipids translocase activity is highly reduced by berylium fluoride and aluminum floride. N-ethylmaleimide inhibits phospholipid translocase activity. In terms of biological role, flippase that catalyzes in an ATP-dependent manner the transport of retinal-phosphatidylethanolamine conjugates like the 11-cis and all-trans isomers of N-retinylidene-phosphatidylethanolamine from the lumen to the cytoplasmic leaflet of photoreceptor outer segment disk membranes, where N-cis-retinylidene-phosphatidylethanolamine (N-cis-R-PE) is then isomerized to its all-trans isomer (N-trans-R-PE) and reduced by RDH8 to produce all-trans-retinol (all-trans-rol) and therefore prevents the accumulation of excess of 11-cis-retinal and its schiff-base conjugate and the formation of toxic bisretinoid. Displays ATPase activity in vitro in absence of retinal substrate. May display GTPase activity that is strongly influenced by the lipid environment and the presence of retinoid compounds. Binds the unprotonated form of N-retinylidene-phosphatidylethanolamine with high affinity in the absence of ATP and ATP binding and hydrolysis induce a protein conformational change that causes the dissociation of N-retinylidene-phosphatidylethanolamine. This chain is Retinal-specific phospholipid-transporting ATPase ABCA4, found in Mus musculus (Mouse).